The following is a 292-amino-acid chain: Elongation factor Ts (292 aa).

The tract at residues 82 to 85 is involved in Mg(2+) ion dislocation from EF-Tu; it reads TDFV.

Belongs to the EF-Ts family.

It is found in the cytoplasm. Associates with the EF-Tu.GDP complex and induces the exchange of GDP to GTP. It remains bound to the aminoacyl-tRNA.EF-Tu.GTP complex up to the GTP hydrolysis stage on the ribosome. This is Elongation factor Ts from Legionella pneumophila (strain Paris).